Reading from the N-terminus, the 1620-residue chain is MGAIGLLWLLPLLLSTAAVGSGMGTGQRAGSPAAGPPLQPREPLSYSRLQRKSLAVDFVVPSLFRVYARDLLLPPSSSELKAGRPEARGSLALDCAPLLRLLGPAPGVSWTAGSPAPAEARTLSRVLKGGSVRKLRRAKQLVLELGEEAILEGCVGPPGEAAVGLLQFNLSELFSWWIRQGEGRLRIRLMPEKKASEVGREGRLSAAIRASQPRLLFQIFGTGHSSLESPTNMPSPSPDYFTWNLTWIMKDSFPFLSHRSRYGLECSFDFPCELEYSPPLHDLRNQSWSWRRIPSEEASQMDLLDGPGAERSKEMPRGSFLLLNTSADSKHTILSPWMRSSSEHCTLAVSVHRHLQPSGRYIAQLLPHNEAAREILLMPTPGKHGWTVLQGRIGRPDNPFRVALEYISSGNRSLSAVDFFALKNCSEGTSPGSKMALQSSFTCWNGTVLQLGQACDFHQDCAQGEDESQMCRKLPVGFYCNFEDGFCGWTQGTLSPHTPQWQVRTLKDARFQDHQDHALLLSTTDVPASESATVTSATFPAPIKSSPCELRMSWLIRGVLRGNVSLVLVENKTGKEQGRMVWHVAAYEGLSLWQWMVLPLLDVSDRFWLQMVAWWGQGSRAIVAFDNISISLDCYLTISGEDKILQNTAPKSRNLFERNPNKELKPGENSPRQTPIFDPTVHWLFTTCGASGPHGPTQAQCNNAYQNSNLSVEVGSEGPLKGIQIWKVPATDTYSISGYGAAGGKGGKNTMMRSHGVSVLGIFNLEKDDMLYILVGQQGEDACPSTNQLIQKVCIGENNVIEEEIRVNRSVHEWAGGGGGGGGATYVFKMKDGVPVPLIIAAGGGGRAYGAKTDTFHPERLENNSSVLGLNGNSGAAGGGGGWNDNTSLLWAGKSLQEGATGGHSCPQAMKKWGWETRGGFGGGGGGCSSGGGGGGYIGGNAASNNDPEMDGEDGVSFISPLGILYTPALKVMEGHGEVNIKHYLNCSHCEVDECHMDPESHKVICFCDHGTVLAEDGVSCIVSPTPEPHLPLSLILSVVTSALVAALVLAFSGIMIVYRRKHQELQAMQMELQSPEYKLSKLRTSTIMTDYNPNYCFAGKTSSISDLKEVPRKNITLIRGLGHGAFGEVYEGQVSGMPNDPSPLQVAVKTLPEVCSEQDELDFLMEALIISKFNHQNIVRCIGVSLQSLPRFILLELMAGGDLKSFLRETRPRPSQPSSLAMLDLLHVARDIACGCQYLEENHFIHRDIAARNCLLTCPGPGRVAKIGDFGMARDIYRASYYRKGGCAMLPVKWMPPEAFMEGIFTSKTDTWSFGVLLWEIFSLGYMPYPSKSNQEVLEFVTSGGRMDPPKNCPGPVYRIMTQCWQHQPEDRPNFAIILERIEYCTQDPDVINTALPIEYGPLVEEEEKVPVRPKDPEGVPPLLVSQQAKREEERSPAAPPPLPTTSSGKAAKKPTAAEISVRVPRGPAVEGGHVNMAFSQSNPPSELHKVHGSRNKPTSLWNPTYGSWFTEKPTKKNNPIAKKEPHDRGNLGLEGSCTVPPNVATGRLPGASLLLEPSSLTANMKEVPLFRLRHFPCGNVNYGYQQQGLPLEAATAPGAGHYEDTILKSKNSMNQPGP.

A signal peptide spans 1-18; that stretch reads MGAIGLLWLLPLLLSTAA. Residues 19–1038 lie on the Extracellular side of the membrane; sequence VGSGMGTGQR…PHLPLSLILS (1020 aa). The interval 48 to 70 is heparin-binding region; that stretch reads RLQRKSLAVDFVVPSLFRVYARD. Asn-169, Asn-244, Asn-285, Asn-324, Asn-411, Asn-424, Asn-445, Asn-563, Asn-571, and Asn-627 each carry an N-linked (GlcNAc...) asparagine glycan. The region spanning 264 to 427 is the MAM 1 domain; it reads LECSFDFPCE…DFFALKNCSE (164 aa). Positions 437–473 constitute an LDL-receptor class A domain; it reads LQSSFTCWNGTVLQLGQACDFHQDCAQGEDESQMCRK. Residues 478-636 enclose the MAM 2 domain; sequence FYCNFEDGFC…NISISLDCYL (159 aa). A disordered region spans residues 650–674; sequence PKSRNLFERNPNKELKPGENSPRQT. Basic and acidic residues predominate over residues 654-666; that stretch reads NLFERNPNKELKP. Cys-688 and Cys-701 are disulfide-bonded. The N-linked (GlcNAc...) asparagine glycan is linked to Asn-709. Cysteines 783 and 794 form a disulfide. Asn-808, Asn-863, Asn-864, and Asn-886 each carry an N-linked (GlcNAc...) asparagine glycan. Cys-906 and Cys-928 are joined by a disulfide. Asn-986 is a glycosylation site (N-linked (GlcNAc...) asparagine). Disulfide bonds link Cys-987–Cys-995, Cys-990–Cys-1006, and Cys-1008–Cys-1021. Residues 987-1025 are EGF-like; sequence CSHCEVDECHMDPESHKVICFCDHGTVLAEDGVSCIVSP. Residues 1039-1059 traverse the membrane as a helical segment; that stretch reads VVTSALVAALVLAFSGIMIVY. Residues 1060 to 1620 lie on the Cytoplasmic side of the membrane; it reads RRKHQELQAM…SKNSMNQPGP (561 aa). 3 positions are modified to phosphotyrosine: Tyr-1078, Tyr-1092, and Tyr-1096. The 277-residue stretch at 1116–1392 folds into the Protein kinase domain; it reads ITLIRGLGHG…IEYCTQDPDV (277 aa). His-1124 provides a ligand contact to ATP. Tyr-1131 carries the post-translational modification Phosphotyrosine. ATP is bound by residues Lys-1150 and 1197–1199; that span reads ELM. Asp-1249 (proton acceptor) is an active-site residue. Asp-1270 contacts ATP. At Tyr-1278 the chain carries Phosphotyrosine. The disordered stretch occupies residues 1408 to 1463; the sequence is EEKVPVRPKDPEGVPPLLVSQQAKREEERSPAAPPPLPTTSSGKAAKKPTAAEISV. The segment covering 1410–1419 has biased composition (basic and acidic residues); that stretch reads KVPVRPKDPE. Tyr-1507 carries the post-translational modification Phosphotyrosine. The interval 1514-1540 is disordered; sequence KPTKKNNPIAKKEPHDRGNLGLEGSCT. A Phosphotyrosine modification is found at Tyr-1604.

This sequence belongs to the protein kinase superfamily. Tyr protein kinase family. Insulin receptor subfamily. Homodimer; homodimerizes following heparin- and ligand-binding. Interacts with CBL, IRS1, PIK3R1 and PLCG1. Interacts with FRS2 and SHC1. Interacts with PTN and MDK. Post-translationally, phosphorylated at tyrosine residues by autocatalysis, which activates kinase activity. In cells not stimulated by a ligand, receptor protein tyrosine phosphatase beta and zeta complex (PTPRB/PTPRZ1) dephosphorylates ALK at the sites in ALK that are undergoing autophosphorylation through autoactivation. Phosphorylation at Tyr-1507 is critical for SHC1 association. N-glycosylated. Expressed in brain and CNS. Also expressed in the small intestine and testis, but not in normal lymphoid cells.

It is found in the cell membrane. It carries out the reaction L-tyrosyl-[protein] + ATP = O-phospho-L-tyrosyl-[protein] + ADP + H(+). Its activity is regulated as follows. Activated upon ALKAL2 ligand-binding. ALKAL2-driven activation is coupled with heparin-binding. Following ligand-binding, homodimerizes and autophosphorylates, activating its kinase activity. Inactivated through dephosphorylation by receptor protein tyrosine phosphatase beta and zeta complex (PTPRB/PTPRZ1) when there is no stimulation by a ligand. Staurosporine, crizotinib and CH5424802 act as inhibitors of ALK kinase activity. Neuronal receptor tyrosine kinase that is essentially and transiently expressed in specific regions of the central and peripheral nervous systems and plays an important role in the genesis and differentiation of the nervous system. Also acts as a key thinness protein involved in the resistance to weight gain: in hypothalamic neurons, controls energy expenditure acting as a negative regulator of white adipose tissue lipolysis and sympathetic tone to fine-tune energy homeostasis. Following activation by ALKAL2 ligand at the cell surface, transduces an extracellular signal into an intracellular response. In contrast, ALKAL1 is not a potent physiological ligand for ALK. Ligand-binding to the extracellular domain induces tyrosine kinase activation, leading to activation of the mitogen-activated protein kinase (MAPK) pathway. Phosphorylates almost exclusively at the first tyrosine of the Y-x-x-x-Y-Y motif. Induces tyrosine phosphorylation of CBL, FRS2, IRS1 and SHC1, as well as of the MAP kinases MAPK1/ERK2 and MAPK3/ERK1. ALK activation may also be regulated by pleiotrophin (PTN) and midkine (MDK). PTN-binding induces MAPK pathway activation, which is important for the anti-apoptotic signaling of PTN and regulation of cell proliferation. MDK-binding induces phosphorylation of the ALK target insulin receptor substrate (IRS1), activates mitogen-activated protein kinases (MAPKs) and PI3-kinase, resulting also in cell proliferation induction. Drives NF-kappa-B activation, probably through IRS1 and the activation of the AKT serine/threonine kinase. Recruitment of IRS1 to activated ALK and the activation of NF-kappa-B are essential for the autocrine growth and survival signaling of MDK. The polypeptide is ALK tyrosine kinase receptor (Homo sapiens (Human)).